A 253-amino-acid polypeptide reads, in one-letter code: Ribosome-inactivating protein saporin-5 (253 aa).

Glu-176 is an active-site residue.

It belongs to the ribosome-inactivating protein family. Type 1 RIP subfamily.

It catalyses the reaction Endohydrolysis of the N-glycosidic bond at one specific adenosine on the 28S rRNA.. In terms of biological role, ribosome-inactivating protein of type 1, inhibits protein synthesis in animal cells. The chain is Ribosome-inactivating protein saporin-5 (SAP5) from Saponaria officinalis (Common soapwort).